The following is a 356-amino-acid chain: Photosynthetic reaction center cytochrome c subunit (356 aa).

The N-terminal stretch at 1–20 (MKQLIVNSVATVALASLVAG) is a signal peptide. A lipid anchor (S-diacylglycerol cysteine) is attached at cysteine 21. Heme contacts are provided by methionine 94, cysteine 107, cysteine 110, histidine 111, methionine 130, histidine 144, cysteine 152, cysteine 155, histidine 156, methionine 253, cysteine 264, cysteine 267, histidine 268, cysteine 325, cysteine 328, and histidine 329.

Component of the photosynthetic reaction center composed of protein subunits L (PufL), M (PufM), H (PuhA) and cytochrome C (PufC). Binds 4 heme groups per subunit. Post-translationally, after the signal sequence is removed, the N-terminal cysteine is modified to form a diacylglyceride thioether, but the alpha-amino group is free and is not N-palmitoylated.

It is found in the cellular chromatophore membrane. In terms of biological role, the reaction center of purple bacteria contains a tightly bound cytochrome molecule which re-reduces the photo oxidized primary electron donor. The polypeptide is Photosynthetic reaction center cytochrome c subunit (Blastochloris viridis (Rhodopseudomonas viridis)).